The sequence spans 144 residues: TSC22 domain family protein 1 (144 aa).

The segment at 77–98 (LKEQIKELIEKNSQLEQENNLL) is leucine-zipper. The interval 109 to 144 (QFQAQLQTGSPPATTQPQGSTQPPAQPASQGSGPTA) is disordered.

This sequence belongs to the TSC-22/Dip/Bun family. As to quaternary structure, forms homodimers. Forms a heterodimer with TSC22D4/THG1. Interacts with histone H1-2. Interacts with GNL3.

It localises to the cytoplasm. Its subcellular location is the nucleus. The protein localises to the mitochondrion. Its function is as follows. Transcriptional repressor. Plays a role in the repression of hematopoietic precursor cell growth. Promotes IL2 deprivation-induced apoptosis in T-lymphocytes, via repression of TSC22D3/GILZ transcription and activation of the caspase cascade. Positively regulates cell death in response to TGFB3 during mammary gland involution. In Bathyergus suillus (Cape dune mole rat), this protein is TSC22 domain family protein 1.